We begin with the raw amino-acid sequence, 325 residues long: Small ribosomal subunit protein uS3 (325 aa).

The 69-residue stretch at 38-106 (IRKMMSKGME…QVQLNILEVK (69 aa)) folds into the KH type-2 domain. The segment at 217 to 325 (EALLRQQRRE…AQGAPEKAEG (109 aa)) is disordered. Over residues 222–232 (QQRRERPRRGP) the composition is skewed to basic residues. Residues 285-316 (TESAAVEGTPVETPAVTPETTAAPAAVTTAEA) show a composition bias toward low complexity.

It belongs to the universal ribosomal protein uS3 family. Part of the 30S ribosomal subunit. Forms a tight complex with proteins S10 and S14.

Functionally, binds the lower part of the 30S subunit head. Binds mRNA in the 70S ribosome, positioning it for translation. The sequence is that of Small ribosomal subunit protein uS3 from Parafrankia sp. (strain EAN1pec).